The chain runs to 312 residues: R2-like ligand binding oxidase (312 aa).

Mn(2+) is bound by residues Glu68, Glu101, and His104. Residues 71-162 (VTQDIQPFMA…AAQVRASATY (92 aa)) constitute a cross-link (3-(O4'-tyrosyl)-valine (Val-Tyr)). Residue Glu101 coordinates Fe cation. Fe cation contacts are provided by Glu167, Glu202, and His205.

It belongs to the ribonucleoside diphosphate reductase small chain family. R2-like ligand binding oxidase subfamily. In terms of assembly, homodimer. Fe cation is required as a cofactor. It depends on Mn(2+) as a cofactor.

Its function is as follows. Probable oxidase that might be involved in lipid metabolism. The protein is R2-like ligand binding oxidase of Mycobacterium sp. (strain JLS).